We begin with the raw amino-acid sequence, 964 residues long: Probable LRR receptor-like serine/threonine-protein kinase IRK (964 aa).

The signal sequence occupies residues Met1–Ser20. Residues Leu21 to Ser603 are Extracellular-facing. LRR repeat units lie at residues Leu92 to Ser116, Leu117 to Gln141, Gly143 to Cys166, Ser168 to Leu190, Asn191 to Leu214, Asn215 to Cys238, Leu240 to Gln261, Ser263 to Met286, Arg287 to Leu310, Ala312 to Cys334, and Ile335 to Asp358. N-linked (GlcNAc...) asparagine glycosylation occurs at Asn104. The N-linked (GlcNAc...) asparagine glycan is linked to Asn173. The N-linked (GlcNAc...) asparagine glycan is linked to Asn317. Asn370 carries an N-linked (GlcNAc...) asparagine glycan. LRR repeat units lie at residues Ile375–Leu399, Arg400–Leu423, His425–Ala447, Val448–Cys471, Ser472–Leu495, Thr496–Leu519, and Tyr521–Gly544. N-linked (GlcNAc...) asparagine glycosylation is present at Asn470. Asn526, Asn562, and Asn578 each carry an N-linked (GlcNAc...) asparagine glycan. Residues Ser604–Leu624 form a helical membrane-spanning segment. The Cytoplasmic portion of the chain corresponds to Asn625 to Ser964. One can recognise a Protein kinase domain in the interval Leu678–Ile951. Residues Leu684 to Val692 and Lys706 contribute to the ATP site.

Belongs to the protein kinase superfamily. Ser/Thr protein kinase family. Interacts with IRKI. Autophosphorylated. Highly expressed in root tips, shoot apices and developing flowers.

It is found in the cell membrane. The catalysed reaction is L-seryl-[protein] + ATP = O-phospho-L-seryl-[protein] + ADP + H(+). It carries out the reaction L-threonyl-[protein] + ATP = O-phospho-L-threonyl-[protein] + ADP + H(+). In Arabidopsis thaliana (Mouse-ear cress), this protein is Probable LRR receptor-like serine/threonine-protein kinase IRK.